A 114-amino-acid polypeptide reads, in one-letter code: Iron-sulfur cluster insertion protein ErpA (114 aa).

Residues cysteine 42, cysteine 106, and cysteine 108 each coordinate iron-sulfur cluster.

The protein belongs to the HesB/IscA family. In terms of assembly, homodimer. Requires iron-sulfur cluster as cofactor.

In terms of biological role, required for insertion of 4Fe-4S clusters for at least IspG. This Proteus mirabilis (strain HI4320) protein is Iron-sulfur cluster insertion protein ErpA.